The sequence spans 139 residues: Small ribosomal subunit protein uS11 (139 aa).

The protein belongs to the universal ribosomal protein uS11 family. As to quaternary structure, part of the 30S ribosomal subunit.

Located on the platform of the 30S subunit. In Pyrobaculum islandicum (strain DSM 4184 / JCM 9189 / GEO3), this protein is Small ribosomal subunit protein uS11.